The chain runs to 186 residues: TATA-box-binding protein B (186 aa).

2 repeat units span residues 10–86 (IENV…FGDI) and 101–179 (VQNI…QDRL).

This sequence belongs to the TBP family.

Its function is as follows. General factor that plays a role in the activation of archaeal genes transcribed by RNA polymerase. Binds specifically to the TATA box promoter element which lies close to the position of transcription initiation. The protein is TATA-box-binding protein B (tbpB1) of Halobacterium salinarum (strain ATCC 700922 / JCM 11081 / NRC-1) (Halobacterium halobium).